The chain runs to 261 residues: uncharacterized protein (261 aa).

This is an uncharacterized protein from Methanocaldococcus jannaschii (strain ATCC 43067 / DSM 2661 / JAL-1 / JCM 10045 / NBRC 100440) (Methanococcus jannaschii).